Here is a 350-residue protein sequence, read N- to C-terminus: tRNA uridine(34) hydroxylase (350 aa).

A Rhodanese domain is found at 146–240 (DDPDAVFIDM…YARRAREQGL (95 aa)). The active-site Cysteine persulfide intermediate is the cysteine 200. A compositionally biased stretch (basic and acidic residues) spans 319 to 328 (RRRRAGRENG). The segment at 319 to 350 (RRRRAGRENGNKIFNKSRGRLNSKLSIPDPAE) is disordered.

This sequence belongs to the TrhO family.

It carries out the reaction uridine(34) in tRNA + AH2 + O2 = 5-hydroxyuridine(34) in tRNA + A + H2O. Its function is as follows. Catalyzes oxygen-dependent 5-hydroxyuridine (ho5U) modification at position 34 in tRNAs. The sequence is that of tRNA uridine(34) hydroxylase from Salmonella schwarzengrund (strain CVM19633).